The sequence spans 288 residues: Serine/threonine-protein phosphatase PGAM5, mitochondrial (288 aa).

Residues 1–6 (MAFRQA) are Mitochondrial matrix-facing. The helical transmembrane segment at 7-29 (LQLAACGLAGGSAAVLFSAVAVG) threads the bilayer. The Mitochondrial intermembrane portion of the chain corresponds to 30–288 (KPRAGGDADT…FMPPDKITRS (259 aa)). The interaction with KEAP1 stretch occupies residues 76–81 (NVEFGE). Position 86 is a phosphoserine (Ser-86). N6-acetyllysine occurs at positions 115, 143, and 190.

This sequence belongs to the phosphoglycerate mutase family. BPG-dependent PGAM subfamily. As to quaternary structure, dimer. Forms a ternary complex with NFE2L2 and KEAP1. Interacts with BCL2L1 and MAP3K5. Upon TNF-induced necrosis, forms in complex with RIPK1, RIPK3 and MLKL; the formation of this complex leads to PGAM5 phosphorylation. Isoform 2, but not isoform 1, interacts with DNM1L; this interaction leads to DNM1L dephosphorylation and activation and eventually to mitochondria fragmentation. Post-translationally, phosphorylated by the RIPK1/RIPK3 complex under necrotic conditions. This phosphorylation increases PGAM5 phosphatase activity. Proteolytically cleaved by PARL in response to loss of mitochondrial membrane potential.

It localises to the mitochondrion outer membrane. It is found in the mitochondrion inner membrane. The catalysed reaction is O-phospho-L-seryl-[protein] + H2O = L-seryl-[protein] + phosphate. It carries out the reaction O-phospho-L-threonyl-[protein] + H2O = L-threonyl-[protein] + phosphate. Mitochondrial serine/threonine phosphatase that dephosphorylates various substrates and thus plays a role in different biological processes including cellular senescence or mitophagy. Modulates cellular senescence by regulating mitochondrial dynamics. Mechanistically, participates in mitochondrial fission through dephosphorylating DNM1L/DRP1. Additionally, dephosphorylates MFN2 in a stress-sensitive manner and consequently protects it from ubiquitination and degradation to promote mitochondrial network formation. Regulates mitophagy independent of PARKIN by interacting with and dephosphorylating FUNDC1, which interacts with LC3. Regulates anti-oxidative response by forming a tertiary complex with KEAP1 and NRF2. Regulates necroptosis by acting as a RIPK3 target and recruiting the RIPK1-RIPK3-MLKL necrosis 'attack' complex to mitochondria. This Rattus norvegicus (Rat) protein is Serine/threonine-protein phosphatase PGAM5, mitochondrial (Pgam5).